The chain runs to 1466 residues: MENPIDSLLLQPIYLSVLSFFLNLVLLLILFGSWLFKKRVACEDTDAIMNEEFKHISFSYNKLVLICCVSLSVFYSVLSLLSCLHWHTNGWPFLDLLLAALTWGSISVYLFGRYTNSCEQKVLFLLRVWWVFFFVVSCYHLVVDFVLYKKQEMVSVHFVISDLVGVCAGLFLCCSCLWKKGEGERIDLLKEPLLSSAESSDNEEVTAPFSKAGILSRMSFSWMSPLITLGNEKIIDIKDVPQLDRSDTTESLFWIFRSKLEWDDGERRITTFKLIKALFLSVWRDIVLSALLAFVYTVSCYVAPYLMDNFVQYLNGNRQYKNQGYVLVTTFFVAKLVECQTQRQWFFRGQKAGLGMRSVLVSMIYEKGLTLPCHSKQGHTSGEIINLMAVDADRISAFSWFMHDPWILVLQVSLALWILYKSLGLGSIAAFPATILVMLANYPFAKLEEKFQSSLMKSKDNRMKKTSEVLLNMKILKLQGWEMKFLSKILELRHIEAGWLKKFVYNSSAINSVLWAAPSFISATAFGACLLLKIPLESGKILAALATFRILQGPIYKLPETISMIVQTKVSLNRIASFLCLDDLQQDVVGRLPSGSSEMAVEISNGTFSWDDSSPIPTLRDMNFKVSQGMNVAICGTVGSGKSSLLSSILGEVPKISGNLKVCGRKAYIAQSPWIQSGKVEENILFGKPMEREWYDRVLEACSLNKDLEILPFHDQTVIGERGINLSGGQKQRIQIARALYQDADIYLFDDPFSAVDAHTGSHLFKEVLLGLLRHKTVIYVTHQVEFLPEADLILVMKDGKITQAGKYHEILDSGTDFMELVGAHTEALATIDSCETGYASEKSTTDKENEVLHHKEKQENGSDNKPSGQLVQEEEREKGKVGFTVYKKYMALAYGGAVIPLILVVQVLFQLLSIGSNYWMTWVTPVSKDVEPPVSGFTLILVYVLLAVASSFCILIRALLVAMTGFKMATELFTQMHLRIFRASMSFFDATPMGRILNRASTDQSVADLRLPGQFAYVAIAAINILGIIGVIVQVAWQVLIVFIPVVAACAWYRQYYISAARELARLAGISRSPVVHHFSETLSGITTIRSFDQEPRFRGDIMRLSDCYSRLKFHSTGAMEWLCFRLELLSTFAFASSLVILVSAPEGVINPSLAGLAITYALNLNTLQATLIWTLCDLENKMISVERMLQYTNIPSEPPLVIETTRPEKSWPSRGEITICNLQVRYGPHLPMVLHGLTCTFPGGLKTGIVGRTGCGKSTLIQTLFRIVEPAAGEIRIDGINILSIGLHDLRSRLSIIPQDPTMFEGTIRSNLDPLEEYTDDQIWEALDNCQLGDEVRKKELKLDSPVSENGQNWSVGQRQLVCLGRVLLKRSKLLVLDEATASIDTATDNLIQETLRHHFADCTVITIAHRISSVIDSDMVLLLDQGLIKEHDSPARLLEDRSSLFSKLVAEYTTSSESKSKRS.

Helical transmembrane passes span 16 to 36, 63 to 83, 91 to 111, 128 to 148, 158 to 178, 286 to 306, 322 to 339, 400 to 420, 425 to 445, and 512 to 532; these read SVLS…SWLF, LVLI…LLSC, WPFL…VYLF, VWWV…FVLY, FVIS…SCLW, IVLS…APYL, NQGY…LVEC, WFMH…WILY, LGSI…YPFA, and SVLW…CLLL. In terms of domain architecture, ABC transmembrane type-1 1 spans 286-567; sequence IVLSALLAFV…LPETISMIVQ (282 aa). Residues 601–824 form the ABC transporter 1 domain; it reads VEISNGTFSW…GTDFMELVGA (224 aa). 636–643 contacts ATP; the sequence is GTVGSGKS. Positions 840-876 are disordered; the sequence is ASEKSTTDKENEVLHHKEKQENGSDNKPSGQLVQEEE. Residues 844–863 show a composition bias toward basic and acidic residues; sequence STTDKENEVLHHKEKQENGS. 3 helical membrane passes run 890–910, 937–957, and 1026–1046; these read YMAL…QVLF, GFTL…CILI, and ILGI…VFIP. One can recognise an ABC transmembrane type-1 2 domain in the interval 900–1182; the sequence is IPLILVVQVL…LIWTLCDLEN (283 aa). The ABC transporter 2 domain occupies 1219–1453; it reads ITICNLQVRY…RSSLFSKLVA (235 aa). 1253-1260 provides a ligand contact to ATP; the sequence is GRTGCGKS.

The protein belongs to the ABC transporter superfamily. ABCC family. Conjugate transporter (TC 3.A.1.208) subfamily. Ubiquitous.

It is found in the membrane. It catalyses the reaction ATP + H2O + xenobioticSide 1 = ADP + phosphate + xenobioticSide 2.. Its function is as follows. Pump for glutathione S-conjugates. The chain is ABC transporter C family member 6 (ABCC6) from Arabidopsis thaliana (Mouse-ear cress).